The primary structure comprises 353 residues: uncharacterized protein (353 aa).

Residues Asp212, Asp223, His287, Glu316, and Glu330 each coordinate Mn(2+).

It belongs to the peptidase M24B family. Requires Mn(2+) as cofactor.

This is an uncharacterized protein from Bacillus subtilis (strain 168).